A 768-amino-acid chain; its full sequence is Gene 24 protein (768 aa).

A disordered region spans residues 102 to 125 (EGEGEREVDEAAAKEEPGNNRIGT). The segment covering 104-119 (EGEREVDEAAAKEEPG) has biased composition (basic and acidic residues).

The protein belongs to the herpesviridae UL87 family.

The chain is Gene 24 protein (24) from Equine herpesvirus 2 (strain 86/87) (EHV-2).